Reading from the N-terminus, the 378-residue chain is Erythronate-4-phosphate dehydrogenase (378 aa).

Substrate-binding residues include Ser-45 and Thr-66. Residues Asp-146 and Thr-175 each coordinate NAD(+). Residue Arg-208 is part of the active site. Asp-232 is a binding site for NAD(+). The active site involves Glu-237. His-254 acts as the Proton donor in catalysis. Gly-257 is an NAD(+) binding site. Tyr-258 provides a ligand contact to substrate.

It belongs to the D-isomer specific 2-hydroxyacid dehydrogenase family. PdxB subfamily. As to quaternary structure, homodimer.

The protein resides in the cytoplasm. It catalyses the reaction 4-phospho-D-erythronate + NAD(+) = (R)-3-hydroxy-2-oxo-4-phosphooxybutanoate + NADH + H(+). It functions in the pathway cofactor biosynthesis; pyridoxine 5'-phosphate biosynthesis; pyridoxine 5'-phosphate from D-erythrose 4-phosphate: step 2/5. Functionally, catalyzes the oxidation of erythronate-4-phosphate to 3-hydroxy-2-oxo-4-phosphonooxybutanoate. This is Erythronate-4-phosphate dehydrogenase from Escherichia coli O157:H7.